A 252-amino-acid chain; its full sequence is uncharacterized protein (252 aa).

Residues 13 to 247 (ITLENVNKWY…PKSERTRAFL (235 aa)) form the ABC transporter domain. An ATP-binding site is contributed by 45-52 (GPSGSGKS).

It belongs to the ABC transporter superfamily.

It localises to the cell inner membrane. Functionally, probably part of a binding-protein-dependent transport system YdhWXYZ for an amino acid. Probably responsible for energy coupling to the transport system. This is an uncharacterized protein from Escherichia coli (strain K12).